The following is a 308-amino-acid chain: Acetylglutamate kinase (308 aa).

Substrate contacts are provided by residues 67–68, arginine 89, and asparagine 193; that span reads GG.

The protein belongs to the acetylglutamate kinase family. ArgB subfamily.

The protein localises to the cytoplasm. The enzyme catalyses N-acetyl-L-glutamate + ATP = N-acetyl-L-glutamyl 5-phosphate + ADP. Its pathway is amino-acid biosynthesis; L-arginine biosynthesis; N(2)-acetyl-L-ornithine from L-glutamate: step 2/4. In terms of biological role, catalyzes the ATP-dependent phosphorylation of N-acetyl-L-glutamate. In Nitratidesulfovibrio vulgaris (strain DP4) (Desulfovibrio vulgaris), this protein is Acetylglutamate kinase.